The primary structure comprises 612 residues: Proton pump-interactor 1 (612 aa).

Residues 1 to 58 (MGVEVVNSGGFEVAPAPFEGKPEKNGKLDQGKGDDAPINFGSVGELPKNAEENNNKVV) form a disordered region. Residues 20–35 (GKPEKNGKLDQGKGDD) are compositionally biased toward basic and acidic residues. Coiled-coil stretches lie at residues 90–113 (PKIKAKLDLADKELEKLNKARTGV) and 251–314 (LDGV…NSEY). Basic and acidic residues-rich tracts occupy residues 374-387 (LSRDGRMRNPDEKP), 434-446 (EKAKDAVKVKNVA), 459-498 (PQKEEKPVDAATAKEMRKQEEIAKAKQAMERKKKLAEKAA), and 505-519 (AQKEAEKKEKKEQEK). Positions 374–572 (LSRDGRMRNP…PIRNRTRGRG (199 aa)) are disordered. The stretch at 466-526 (VDAATAKEMR…QEKKAKKKTG (61 aa)) forms a coiled coil. The span at 531-545 (TETEEVPEASEEEIE) shows a compositional bias: acidic residues. A Phosphoserine modification is found at Ser-540. The segment covering 549–564 (QEEKPQKEKVFKEKPI) has biased composition (basic and acidic residues). Residues 591-611 (VYAAPAALVVLLLLVLGYYYV) form a helical membrane-spanning segment.

Belongs to the plant Proton pump-interactor protein family. In terms of assembly, interacts with AHA1 via N-terminal region. In terms of tissue distribution, strongly expressed in root and shoot vascular systems, particularly in meristematic and sink tissues. Also present in pollen, stigmas and siliques, but not in developing embryos.

The protein localises to the cell membrane. Its subcellular location is the endoplasmic reticulum membrane. Its function is as follows. Promotes AHA1 plasma membrane ATPase activity by binding to a site different from the 14-3-3 binding site. The chain is Proton pump-interactor 1 (PPI1) from Arabidopsis thaliana (Mouse-ear cress).